The sequence spans 156 residues: Small ribosomal subunit protein uS7 (156 aa).

Belongs to the universal ribosomal protein uS7 family. Part of the 30S ribosomal subunit. Contacts proteins S9 and S11.

In terms of biological role, one of the primary rRNA binding proteins, it binds directly to 16S rRNA where it nucleates assembly of the head domain of the 30S subunit. Is located at the subunit interface close to the decoding center, probably blocks exit of the E-site tRNA. The chain is Small ribosomal subunit protein uS7 from Chelativorans sp. (strain BNC1).